The sequence spans 399 residues: Acetate kinase (399 aa).

Asn-7 provides a ligand contact to Mg(2+). ATP is bound at residue Lys-14. Arg-90 is a binding site for substrate. The active-site Proton donor/acceptor is the Asp-147. ATP is bound by residues 207–211, 282–284, and 330–334; these read HLGNG, DFR, and GIGEN. Glu-385 contacts Mg(2+).

This sequence belongs to the acetokinase family. As to quaternary structure, homodimer. Requires Mg(2+) as cofactor. It depends on Mn(2+) as a cofactor.

It is found in the cytoplasm. It catalyses the reaction acetate + ATP = acetyl phosphate + ADP. It functions in the pathway metabolic intermediate biosynthesis; acetyl-CoA biosynthesis; acetyl-CoA from acetate: step 1/2. Functionally, catalyzes the formation of acetyl phosphate from acetate and ATP. Can also catalyze the reverse reaction. This Caldicellulosiruptor saccharolyticus (strain ATCC 43494 / DSM 8903 / Tp8T 6331) protein is Acetate kinase.